The following is a 288-amino-acid chain: Diaminopimelate epimerase (288 aa).

Asparagine 14 and asparagine 67 together coordinate substrate. Cysteine 76 (proton donor) is an active-site residue. Residues glycine 77–asparagine 78, asparagine 166, asparagine 199, and glutamate 217–arginine 218 each bind substrate. The active-site Proton acceptor is cysteine 226. Glycine 227–threonine 228 is a substrate binding site.

This sequence belongs to the diaminopimelate epimerase family. In terms of assembly, homodimer.

It is found in the cytoplasm. It catalyses the reaction (2S,6S)-2,6-diaminopimelate = meso-2,6-diaminopimelate. It functions in the pathway amino-acid biosynthesis; L-lysine biosynthesis via DAP pathway; DL-2,6-diaminopimelate from LL-2,6-diaminopimelate: step 1/1. Catalyzes the stereoinversion of LL-2,6-diaminopimelate (L,L-DAP) to meso-diaminopimelate (meso-DAP), a precursor of L-lysine and an essential component of the bacterial peptidoglycan. In Bacillus anthracis (strain A0248), this protein is Diaminopimelate epimerase.